Consider the following 443-residue polypeptide: Glutamate-1-semialdehyde 2,1-aminomutase (443 aa).

Residues 1–16 (MSVNADSQHSNNSSHQ) are compositionally biased toward low complexity. The interval 1 to 22 (MSVNADSQHSNNSSHQASEKAF) is disordered. At lysine 277 the chain carries N6-(pyridoxal phosphate)lysine.

It belongs to the class-III pyridoxal-phosphate-dependent aminotransferase family. HemL subfamily. Homodimer. Pyridoxal 5'-phosphate serves as cofactor.

It localises to the cytoplasm. It carries out the reaction (S)-4-amino-5-oxopentanoate = 5-aminolevulinate. It participates in porphyrin-containing compound metabolism; protoporphyrin-IX biosynthesis; 5-aminolevulinate from L-glutamyl-tRNA(Glu): step 2/2. The sequence is that of Glutamate-1-semialdehyde 2,1-aminomutase from Corynebacterium jeikeium (strain K411).